The sequence spans 214 residues: Charged multivesicular body protein 2b-A (214 aa).

The stretch at 25–55 forms a coiled coil; the sequence is QRAITRDRTALEKQEKQLEMEIKKMAKAGNK. The tract at residues 178-214 is disordered; the sequence is MAKAPSAAKGLPSASASKSTGISDEEIERQLKALGVD. The MIT-interacting motif motif lies at 202–212; it reads EEIERQLKALG.

The protein belongs to the SNF7 family. As to quaternary structure, probable core component of the endosomal sorting required for transport complex III (ESCRT-III). ESCRT-III components are thought to multimerize to form a flat lattice on the perimeter membrane of the endosome.

The protein localises to the cytoplasm. Its subcellular location is the cytosol. It localises to the late endosome membrane. Its function is as follows. Probable core component of the endosomal sorting required for transport complex III (ESCRT-III) which is involved in multivesicular bodies (MVBs) formation and sorting of endosomal cargo proteins into MVBs. MVBs contain intraluminal vesicles (ILVs) that are generated by invagination and scission from the limiting membrane of the endosome and mostly are delivered to lysosomes enabling degradation of membrane proteins, such as stimulated growth factor receptors, lysosomal enzymes and lipids. The polypeptide is Charged multivesicular body protein 2b-A (chmp2b-a) (Xenopus laevis (African clawed frog)).